We begin with the raw amino-acid sequence, 386 residues long: MSVIKMTDLDLAGKRVFIRADLNVPVKDGKVTSDARIRATIPTLKLALEKGAKVMVTSHLGRPTEGEFTPEDSLQPVVDYLKNAGFNVRLEQDYLNGVDVKDGEIVVLENVRINKGEKKNDPELGKKYAALCDVFVMDAFGTAHRAQASTYGVAEFAPIACAGPLLAAELDALGKALKEPARPMVAIVGGSKVSTKLEVLNSLSKIADQIIVGGGIANTFIAAAGHNVGKSLYEADLMPVAKELAANTDIPVPVDVRVGLEFSETAAATEKAVNEVKDDESIFDIGDKSAEQLAEIIKNAKTVLWNGPVGVFEFPHFRKGTEIISHAIANSDAFSIAGGGDTLAAIDLFGIADKISYISTGGGAFLEFVEGKVLPAVEILEKRAKN.

Residues 21-23 (DLN), Arg36, 59-62 (HLGR), Arg112, and Arg145 each bind substrate. ATP contacts are provided by residues Lys196, Glu313, and 339–342 (GGDT).

This sequence belongs to the phosphoglycerate kinase family. In terms of assembly, monomer.

The protein localises to the cytoplasm. It carries out the reaction (2R)-3-phosphoglycerate + ATP = (2R)-3-phospho-glyceroyl phosphate + ADP. It functions in the pathway carbohydrate degradation; glycolysis; pyruvate from D-glyceraldehyde 3-phosphate: step 2/5. The chain is Phosphoglycerate kinase from Haemophilus influenzae (strain 86-028NP).